The chain runs to 396 residues: Acetate kinase (396 aa).

Asn7 contributes to the Mg(2+) binding site. Lys14 contributes to the ATP binding site. Residue Arg91 coordinates substrate. Asp148 (proton donor/acceptor) is an active-site residue. Residues 208 to 212 (HLGNG), 283 to 285 (DFR), and 331 to 335 (GLGEN) each bind ATP. Glu384 is a Mg(2+) binding site.

The protein belongs to the acetokinase family. Homodimer. Requires Mg(2+) as cofactor. The cofactor is Mn(2+).

It is found in the cytoplasm. It carries out the reaction acetate + ATP = acetyl phosphate + ADP. It participates in metabolic intermediate biosynthesis; acetyl-CoA biosynthesis; acetyl-CoA from acetate: step 1/2. Functionally, catalyzes the formation of acetyl phosphate from acetate and ATP. Can also catalyze the reverse reaction. The sequence is that of Acetate kinase from Alkaliphilus metalliredigens (strain QYMF).